A 517-amino-acid polypeptide reads, in one-letter code: GMP synthase [glutamine-hydrolyzing] (517 aa).

The 192-residue stretch at 11–202 (KIIVLDFGSQ…AFDVCEAKAN (192 aa)) folds into the Glutamine amidotransferase type-1 domain. Residue cysteine 88 is the Nucleophile of the active site. Active-site residues include histidine 176 and glutamate 178. In terms of domain architecture, GMPS ATP-PPase spans 203–392 (WSMNDFIDMQ…LGMPEDLVWR (190 aa)). ATP is bound at residue 230–236 (SGGVDSS).

In terms of assembly, homodimer.

The catalysed reaction is XMP + L-glutamine + ATP + H2O = GMP + L-glutamate + AMP + diphosphate + 2 H(+). Its pathway is purine metabolism; GMP biosynthesis; GMP from XMP (L-Gln route): step 1/1. Catalyzes the synthesis of GMP from XMP. The protein is GMP synthase [glutamine-hydrolyzing] of Pediococcus pentosaceus (strain ATCC 25745 / CCUG 21536 / LMG 10740 / 183-1w).